Consider the following 285-residue polypeptide: Urease accessory protein UreD (285 aa).

It belongs to the UreD family. UreD, UreF and UreG form a complex that acts as a GTP-hydrolysis-dependent molecular chaperone, activating the urease apoprotein by helping to assemble the nickel containing metallocenter of UreC. The UreE protein probably delivers the nickel.

The protein localises to the cytoplasm. Its function is as follows. Required for maturation of urease via the functional incorporation of the urease nickel metallocenter. This chain is Urease accessory protein UreD, found in Cenarchaeum symbiosum (strain A).